Here is a 197-residue protein sequence, read N- to C-terminus: MEAFTKHTGRAVPLRRSNVDTDQIIPAHWLKKVTRDGFEDGLFEAWRKDPEFVLNRPEREGATVLVAGPDFGTGSSREHAVWALQNYGFKTVVSSRFADIFRGNSLKNGLLTVVLDQKTVDALWELVERDPQAEITVDLEAREVRAEGVTASFELDENSRWRLLNGLDDISITLQNEADIAAYEAKRPSFKPQTVQV.

It belongs to the LeuD family. LeuD type 1 subfamily. As to quaternary structure, heterodimer of LeuC and LeuD.

The enzyme catalyses (2R,3S)-3-isopropylmalate = (2S)-2-isopropylmalate. It functions in the pathway amino-acid biosynthesis; L-leucine biosynthesis; L-leucine from 3-methyl-2-oxobutanoate: step 2/4. Its function is as follows. Catalyzes the isomerization between 2-isopropylmalate and 3-isopropylmalate, via the formation of 2-isopropylmaleate. The sequence is that of 3-isopropylmalate dehydratase small subunit (leuD) from Streptomyces coelicolor (strain ATCC BAA-471 / A3(2) / M145).